Reading from the N-terminus, the 468-residue chain is Dimethylamine methyltransferase MtbB2 (468 aa).

O356 is a non-standard amino acid (pyrrolysine).

This sequence belongs to the dimethylamine methyltransferase family.

The enzyme catalyses Co(I)-[dimethylamine-specific corrinoid protein] + dimethylamine + H(+) = methyl-Co(III)-[dimethylamine-specific corrinoid protein] + methylamine. The protein operates within one-carbon metabolism; methanogenesis from dimethylamine. Its function is as follows. Catalyzes the transfer of a methyl group from dimethylamine to the corrinoid cofactor of MtbC. This chain is Dimethylamine methyltransferase MtbB2 (mtbB2), found in Methanosarcina acetivorans (strain ATCC 35395 / DSM 2834 / JCM 12185 / C2A).